The following is a 217-amino-acid chain: Large ribosomal subunit protein uL3 (217 aa).

The segment at 129 to 161 is disordered; it reads SRGPMSHGSKNHRAPGSTGAGTTPGRIYPGKRM. The segment covering 142-153 has biased composition (low complexity); it reads APGSTGAGTTPG.

This sequence belongs to the universal ribosomal protein uL3 family. In terms of assembly, part of the 50S ribosomal subunit. Forms a cluster with proteins L14 and L19.

In terms of biological role, one of the primary rRNA binding proteins, it binds directly near the 3'-end of the 23S rRNA, where it nucleates assembly of the 50S subunit. The sequence is that of Large ribosomal subunit protein uL3 from Prochlorococcus marinus (strain MIT 9515).